Here is a 1089-residue protein sequence, read N- to C-terminus: Platelet-derived growth factor receptor alpha (1089 aa).

The signal sequence occupies residues Met-1–Cys-23. 5 consecutive Ig-like C2-type domains span residues Gln-24 to Glu-113, Ile-117 to Ile-201, Pro-202 to Thr-306, Pro-319 to Leu-410, and Pro-414 to Val-517. Residues Gln-24 to Ala-528 lie on the Extracellular side of the membrane. Asn-42, Asn-76, Asn-103, and Asn-179 each carry an N-linked (GlcNAc...) asparagine glycan. The cysteines at positions 49 and 100 are disulfide-linked. 2 disulfide bridges follow: Cys-150-Cys-189 and Cys-235-Cys-290. N-linked (GlcNAc...) asparagine glycans are attached at residues Asn-353, Asn-359, Asn-458, and Asn-468. Cys-435 and Cys-501 are joined by a disulfide. Residues Ala-529–Trp-549 form a helical membrane-spanning segment. At Lys-550 to Leu-1089 the chain is on the cytoplasmic side. Phosphotyrosine; by autocatalysis occurs at positions 572 and 574. Residues Leu-593–Leu-954 form the Protein kinase domain. Residues Leu-599–Val-607 and Lys-627 each bind ATP. Phosphotyrosine; by autocatalysis occurs at positions 720, 731, 742, 754, 762, and 768. Asp-818 (proton acceptor) is an active-site residue. 3 positions are modified to phosphotyrosine; by autocatalysis: Tyr-849, Tyr-988, and Tyr-1018. The disordered stretch occupies residues Tyr-1018–Leu-1089. Over residues Ser-1041–Phe-1059 the composition is skewed to polar residues. The segment covering Glu-1065–Leu-1089 has biased composition (acidic residues).

Belongs to the protein kinase superfamily. Tyr protein kinase family. CSF-1/PDGF receptor subfamily. As to quaternary structure, interacts with homodimeric PDGFA, PDGFB and PDGFC, and with heterodimers formed by PDGFA and PDGFB. Monomer in the absence of bound ligand. Interaction with dimeric PDGFA, PDGFB and/or PDGFC leads to receptor dimerization, where both PDGFRA homodimers and heterodimers with PDGFRB are observed. Interacts (tyrosine phosphorylated) with SHB (via SH2 domain). Interacts (tyrosine phosphorylated) with SHF (via SH2 domain). Interacts (tyrosine phosphorylated) with SRC (via SH2 domain). Interacts (tyrosine phosphorylated) with PIK3R1. Interacts (tyrosine phosphorylated) with PLCG1 (via SH2 domain). Interacts (tyrosine phosphorylated) with CRK, GRB2 and GRB7. Interacts with CD248; this interaction promotes PDGF receptor signaling pathway. In terms of assembly, (Microbial infection) Interacts with human cytomegalovirus/HHV-5 envelope glycoprotein B/gB. Also interacts with the trimeric complex gH-gL-gO. Trimer-PDGFRA interaction has an inhibitory effect on PDGFRA signaling. In terms of processing, N-glycosylated. Ubiquitinated, leading to its internalization and degradation. Post-translationally, autophosphorylated on tyrosine residues upon ligand binding. Autophosphorylation occurs in trans, i.e. one subunit of the dimeric receptor phosphorylates tyrosine residues on the other subunit. Phosphorylation at Tyr-731 and Tyr-742 is important for interaction with PIK3R1. Phosphorylation at Tyr-720 and Tyr-754 is important for interaction with PTPN11. Phosphorylation at Tyr-762 is important for interaction with CRK. Phosphorylation at Tyr-572 and Tyr-574 is important for interaction with SRC and SRC family members. Phosphorylation at Tyr-988 and Tyr-1018 is important for interaction with PLCG1. Detected in platelets (at protein level). Widely expressed. Detected in brain, fibroblasts, smooth muscle, heart, and embryo. Expressed in primary and metastatic colon tumors and in normal colon tissue.

It is found in the cell membrane. The protein resides in the cell projection. The protein localises to the cilium. Its subcellular location is the golgi apparatus. The enzyme catalyses L-tyrosyl-[protein] + ATP = O-phospho-L-tyrosyl-[protein] + ADP + H(+). Present in an inactive conformation in the absence of bound ligand. Binding of PDGFA and/or PDGFB leads to dimerization and activation by autophosphorylation on tyrosine residues. Inhibited by imatinib, nilotinib and sorafenib. Tyrosine-protein kinase that acts as a cell-surface receptor for PDGFA, PDGFB and PDGFC and plays an essential role in the regulation of embryonic development, cell proliferation, survival and chemotaxis. Depending on the context, promotes or inhibits cell proliferation and cell migration. Plays an important role in the differentiation of bone marrow-derived mesenchymal stem cells. Required for normal skeleton development and cephalic closure during embryonic development. Required for normal development of the mucosa lining the gastrointestinal tract, and for recruitment of mesenchymal cells and normal development of intestinal villi. Plays a role in cell migration and chemotaxis in wound healing. Plays a role in platelet activation, secretion of agonists from platelet granules, and in thrombin-induced platelet aggregation. Binding of its cognate ligands - homodimeric PDGFA, homodimeric PDGFB, heterodimers formed by PDGFA and PDGFB or homodimeric PDGFC -leads to the activation of several signaling cascades; the response depends on the nature of the bound ligand and is modulated by the formation of heterodimers between PDGFRA and PDGFRB. Phosphorylates PIK3R1, PLCG1, and PTPN11. Activation of PLCG1 leads to the production of the cellular signaling molecules diacylglycerol and inositol 1,4,5-trisphosphate, mobilization of cytosolic Ca(2+) and the activation of protein kinase C. Phosphorylates PIK3R1, the regulatory subunit of phosphatidylinositol 3-kinase, and thereby mediates activation of the AKT1 signaling pathway. Mediates activation of HRAS and of the MAP kinases MAPK1/ERK2 and/or MAPK3/ERK1. Promotes activation of STAT family members STAT1, STAT3 and STAT5A and/or STAT5B. Receptor signaling is down-regulated by protein phosphatases that dephosphorylate the receptor and its down-stream effectors, and by rapid internalization of the activated receptor. This chain is Platelet-derived growth factor receptor alpha (PDGFRA), found in Homo sapiens (Human).